The chain runs to 1081 residues: MAGNEWINGYLEAILDTGASAIDENSGGGKTAAAQKGRHHDHHFNPTKYFVEEVVSGVDESDLHRTWIKVVATRNTRERSSRLENMCWRIWHLTRKKKQLEWEDLQRLAARKWEREQGRKDVTEDMSEDLSEGEKGDVMGETPVALDSPRGNKKYHRNFSNLEVWSDSNKEKKLYIVLISLHGLVRGENMELGRDSDTGGQIKYVVEVARALAKMPGVYRVDLFTRQISSPEVDWSYAEPTEMLSSSSTTAGEAHEPEEEEEEEDLGEGSGAYIIRIPFGPRDKYLRKELLWPHIQEFVDGALSHIVNMSKALGDQIGGGQPVWPYVIHGHYADAGDSAALLSGALNVPMVLTGHSLGRNKLEQLLKQGRQTKEDINSMYRIMRRIEAEELSLDAAELVITSTKQEIEEQWGLYDGFDVKLERVLRARARRGVNCHGRFMPRMAVIPPGMDFSNVVVPEDGSEGDGDLATLTEATSPRSVPAIWADVMRFLTNPHKPMILALSRPDPKKNITTLVKAFGECRPLRELANLTLIMGNRDDIDEMSGGNASVLTTVLKLIDRYDLYGQVAFPKHHKQSDVPEIYRLASKTKGVFINPAFIEPFGLTLIEAAAHGLPMVATKNGGPVDIHRALNNGLLVDPHDQDAIANALLKLVSEKNLWNECRKNGLKNIHLFSWPEHCRTYLTRVAACRMRHPQWKTDTPLDETAIDDSLNDSLKDVLDMSLRLSVDGEKMSVNESSSVELPGGEAAELPDQVRRVLNKIKRQDSGPAQREAEGKAGDVPGKYPMLRRRRKLFVIALDCYDLKGNPDKKMILSIQEIVRAVRLDPQMSRFSGFALSTAMPVAELADFLKAGDVKVNDFDALICSSGSEVYYPGTYGEESGKLYLDPDYTSHIEYRWGGDGLKKTISKLMNTAEDGKSSVASSPIELVAKSSNSHCLSYAIKDPSKAKKVDDMRQKLRMRGLRCHLMYCRNSTSMQVVPLLASRSQALRYLFVRWRLSVANMYVILGETGDTDYEELISGTHKTLIMRGVVEKGSEELLRTAGSYLRDDVIPQDTPLIAYADKGAKAEHIVETFRQLSKAGM.

Disordered stretches follow at residues 116 to 152 (EQGRKDVTEDMSEDLSEGEKGDVMGETPVALDSPRGN), 239 to 267 (EPTEMLSSSSTTAGEAHEPEEEEEEEDLG), and 760 to 780 (IKRQDSGPAQREAEGKAGDVP). Acidic residues predominate over residues 256 to 267 (EPEEEEEEEDLG).

This sequence belongs to the glycosyltransferase 1 family. As to quaternary structure, homodimer or homotetramer.

It catalyses the reaction beta-D-fructose 6-phosphate + UDP-alpha-D-glucose = sucrose 6(F)-phosphate + UDP + H(+). It participates in glycan biosynthesis; sucrose biosynthesis; sucrose from D-fructose 6-phosphate and UDP-alpha-D-glucose: step 1/2. Activity is regulated by phosphorylation and moderated by concentration of metabolites and light. Its function is as follows. Plays a role in photosynthetic sucrose synthesis by catalyzing the rate-limiting step of sucrose biosynthesis from UDP-glucose and fructose- 6-phosphate. Involved in the regulation of carbon partitioning in the leaves of plants. May regulate the synthesis of sucrose and therefore play a major role as a limiting factor in the export of photoassimilates out of the leaf. Plays a role for sucrose availability that is essential for plant growth and fiber elongation. The protein is Probable sucrose-phosphate synthase 2 (SPS2) of Craterostigma plantagineum (Blue gem).